A 428-amino-acid chain; its full sequence is Putative zinc finger protein 355P (428 aa).

Residues 1 to 64 (MRDEVAEKEK…KHPGLTQHNI (64 aa)) enclose the KRAB domain. C2H2-type zinc fingers lie at residues 72–94 (YKCK…QRIH), 100–122 (YKCE…MRAH), and 128–150 (YKCE…KRIH). The C2H2-type 4; degenerate zinc finger occupies 156–178 (YKFEECDKAFYWVLSFTKHMIIH). The C2H2-type 5; degenerate zinc finger occupies 184 to 206 (YKYQECGKAFKWSSNLTIHKRIH). The C2H2-type 6; degenerate zinc finger occupies 212–234 (CKCEECGKACKQSLGLTIQKRIH). The C2H2-type 7; degenerate zinc-finger motif lies at 263-285 (YNCEKCGKAFYCSSNLIQNNIVH). C2H2-type zinc fingers lie at residues 291–313 (YKCQ…KIIH) and 335–357 (YKCE…MIVH). Residues 363 to 385 (YKCEECGKAFKWSSELTIHQRIR) form a C2H2-type 10; degenerate zinc finger. The C2H2-type 11 zinc finger occupies 391–413 (YKCEECVRVFKHSSKLNEHKRNH).

The protein belongs to the krueppel C2H2-type zinc-finger protein family.

The protein resides in the nucleus. May be involved in transcriptional regulation. The polypeptide is Putative zinc finger protein 355P (ZNF355P) (Homo sapiens (Human)).